The primary structure comprises 105 residues: Met repressor (105 aa).

This sequence belongs to the MetJ family. Homodimer.

It is found in the cytoplasm. This regulatory protein, when combined with SAM (S-adenosylmethionine) represses the expression of the methionine regulon and of enzymes involved in SAM synthesis. The sequence is that of Met repressor from Pasteurella multocida (strain Pm70).